The following is a 376-amino-acid chain: Deoxyuridine 5'-triphosphate nucleotidohydrolase (376 aa).

The protein belongs to the dUTPase family. It depends on Mg(2+) as a cofactor.

It catalyses the reaction dUTP + H2O = dUMP + diphosphate + H(+). Functionally, involved in nucleotide metabolism: produces dUMP, the immediate precursor of thymidine nucleotides and decreases the intracellular concentration of dUTP to avoid uracil incorporation into viral DNA. This is Deoxyuridine 5'-triphosphate nucleotidohydrolase from Human herpesvirus 6B (strain Z29) (HHV-6 variant B).